Consider the following 99-residue polypeptide: Large ribosomal subunit protein uL23 (99 aa).

It belongs to the universal ribosomal protein uL23 family. As to quaternary structure, part of the 50S ribosomal subunit. Contacts protein L29, and trigger factor when it is bound to the ribosome.

In terms of biological role, one of the early assembly proteins it binds 23S rRNA. One of the proteins that surrounds the polypeptide exit tunnel on the outside of the ribosome. Forms the main docking site for trigger factor binding to the ribosome. This Psychromonas ingrahamii (strain DSM 17664 / CCUG 51855 / 37) protein is Large ribosomal subunit protein uL23.